The primary structure comprises 333 residues: Chlorophyllide reductase 35.5 kDa chain (333 aa).

The span at 1-17 shows a compositional bias: basic and acidic residues; that stretch reads MTDAPELKAFDQRLRDE. The tract at residues 1-30 is disordered; sequence MTDAPELKAFDQRLRDEAAEEPTLEVPQGE. Residues 45–50 and lysine 74 each bind ATP; that span reads GIGKSF. Mg(2+) is bound at residue serine 49. Residues cysteine 130 and cysteine 165 each coordinate [4Fe-4S] cluster. 219-220 contacts ATP; sequence NK.

Belongs to the NifH/BchL/ChlL family. Homodimer. Chlorophyllide reductase is composed of three subunits; BchX, BchY and BchZ. Requires [4Fe-4S] cluster as cofactor.

It catalyses the reaction 3-deacetyl-3-vinylbacteriochlorophyllide a + 2 oxidized [2Fe-2S]-[ferredoxin] + ADP + phosphate = chlorophyllide a + 2 reduced [2Fe-2S]-[ferredoxin] + ATP + H2O + H(+). It carries out the reaction bacteriochlorophyllide a + 2 oxidized [2Fe-2S]-[ferredoxin] + ADP + phosphate = 3-acetyl-3-devinylchlorophyllide a + 2 reduced [2Fe-2S]-[ferredoxin] + ATP + H2O + H(+). The catalysed reaction is 3-deacetyl-3-(1-hydroxyethyl)bacteriochlorophyllide a + 2 oxidized [2Fe-2S]-[ferredoxin] + ADP + phosphate = 3-devinyl-3-(1-hydroxyethyl)chlorophyllide a + 2 reduced [2Fe-2S]-[ferredoxin] + ATP + H2O + H(+). It functions in the pathway porphyrin-containing compound metabolism; bacteriochlorophyll biosynthesis. In terms of biological role, converts chlorophylls (Chl) into bacteriochlorophylls (BChl) by reducing ring B of the tetrapyrrole. This chain is Chlorophyllide reductase 35.5 kDa chain (bchX), found in Cereibacter sphaeroides (strain ATCC 17023 / DSM 158 / JCM 6121 / CCUG 31486 / LMG 2827 / NBRC 12203 / NCIMB 8253 / ATH 2.4.1.) (Rhodobacter sphaeroides).